A 149-amino-acid chain; its full sequence is MNKMTNNKTIWMKPRYVKKKWYVIDASDKVLGRIATEAVKILRGKHKPYYTPHQDLGDNVVIINASKVKLTGKKYFQKIYYRHSRYPGGLYSDTYRTLSERKPTAPLEIAIKGMLPKGPLGRELFRNLKVFADANHKLSSQNLYKLEAN.

Belongs to the universal ribosomal protein uL13 family. As to quaternary structure, part of the 50S ribosomal subunit.

This protein is one of the early assembly proteins of the 50S ribosomal subunit, although it is not seen to bind rRNA by itself. It is important during the early stages of 50S assembly. This chain is Large ribosomal subunit protein uL13, found in Borrelia duttonii (strain Ly).